Here is a 480-residue protein sequence, read N- to C-terminus: Glycogen synthase (480 aa).

Lysine 15 contributes to the ADP-alpha-D-glucose binding site.

This sequence belongs to the glycosyltransferase 1 family. Bacterial/plant glycogen synthase subfamily.

The enzyme catalyses [(1-&gt;4)-alpha-D-glucosyl](n) + ADP-alpha-D-glucose = [(1-&gt;4)-alpha-D-glucosyl](n+1) + ADP + H(+). The protein operates within glycan biosynthesis; glycogen biosynthesis. Functionally, synthesizes alpha-1,4-glucan chains using ADP-glucose. The sequence is that of Glycogen synthase from Rhizobium leguminosarum bv. trifolii (strain WSM2304).